A 1484-amino-acid polypeptide reads, in one-letter code: Ral GTPase-activating protein subunit beta (1484 aa).

Disordered stretches follow at residues 355-437 and 699-728; these read PRSD…APRR and ENNLKSHSRTNSGISSASGGSTEPTTPDSE. At Ser359 the chain carries Phosphoserine. 2 positions are modified to phosphothreonine: Thr363 and Thr379. 3 stretches are compositionally biased toward polar residues: residues 369 to 381, 392 to 428, and 701 to 725; these read SMPQSAAVNTTPP, NKATMKTSTVTTAHTSKVQHQASSTSPLSSPNQTSSE, and NLKSHSRTNSGISSASGGSTEPTTP. Ser421 and Ser710 each carry phosphoserine. The residue at position 724 (Thr724) is a Phosphothreonine. Residues 1138–1382 enclose the Rap-GAP domain; sequence IGYLDLLPCR…TTLEKEVPVI (245 aa). The residue at position 1275 (Ser1275) is a Phosphoserine. The interval 1297 to 1325 is disordered; it reads PNHTDSLNSSQRLSPSSRMKKLPQGRPVP. Positions 1302–1313 are enriched in low complexity; that stretch reads SLNSSQRLSPSS.

As to quaternary structure, component of the heterodimeric RalGAP1 complex with RALGAPA1 and of the heterodimeric RalGAP2 complex with RALGAPA2. Heterodimerization is required for activity. In terms of tissue distribution, abundantly expressed in testis, pancreas, lung, thymus, brown fat, and white fat. Expressed at lower levels in the brain.

Non-catalytic subunit of the heterodimeric RalGAP1 and RalGAP2 complexes which act as GTPase activators for the Ras-like small GTPases RALA and RALB. The polypeptide is Ral GTPase-activating protein subunit beta (Ralgapb) (Mus musculus (Mouse)).